The sequence spans 322 residues: uncharacterized protein (322 aa).

Basic residues-rich tracts occupy residues 1–16 and 43–61; these read MPGN…KSGT and LRPH…RRPV. The interval 1–69 is disordered; that stretch reads MPGNSRRRGA…PVKRADETET (69 aa). The S-adenosyl-L-methionine site is built by Gly261, Ile281, and Leu290.

The protein belongs to the class IV-like SAM-binding methyltransferase superfamily. RNA methyltransferase TrmH family.

This is an uncharacterized protein from Mycobacterium bovis (strain BCG / Pasteur 1173P2).